A 73-amino-acid chain; its full sequence is MKANIHPDYHTIKVVMTDGTEYMTRSTWGKEGDTMNLDIDPTTHPAWTGGSQTLLDRGGRVTKFKNRFGNLGI.

The protein belongs to the bacterial ribosomal protein bL31 family. Type A subfamily. In terms of assembly, part of the 50S ribosomal subunit.

Its function is as follows. Binds the 23S rRNA. This chain is Large ribosomal subunit protein bL31, found in Brucella abortus (strain 2308).